Consider the following 363-residue polypeptide: S-adenosylmethionine:tRNA ribosyltransferase-isomerase (363 aa).

The protein belongs to the QueA family. As to quaternary structure, monomer.

Its subcellular location is the cytoplasm. It catalyses the reaction 7-aminomethyl-7-carbaguanosine(34) in tRNA + S-adenosyl-L-methionine = epoxyqueuosine(34) in tRNA + adenine + L-methionine + 2 H(+). The protein operates within tRNA modification; tRNA-queuosine biosynthesis. Transfers and isomerizes the ribose moiety from AdoMet to the 7-aminomethyl group of 7-deazaguanine (preQ1-tRNA) to give epoxyqueuosine (oQ-tRNA). This chain is S-adenosylmethionine:tRNA ribosyltransferase-isomerase, found in Brucella anthropi (strain ATCC 49188 / DSM 6882 / CCUG 24695 / JCM 21032 / LMG 3331 / NBRC 15819 / NCTC 12168 / Alc 37) (Ochrobactrum anthropi).